Here is a 535-residue protein sequence, read N- to C-terminus: CTP synthase (535 aa).

The interval 1–267 is amidoligase domain; it reads MTKYIFVTGG…DQIVCDHLKL (267 aa). Residue serine 13 participates in CTP binding. Serine 13 is a UTP binding site. 14–19 contacts ATP; it reads SLGKGI. L-glutamine is bound at residue tyrosine 54. Aspartate 71 is an ATP binding site. 2 residues coordinate Mg(2+): aspartate 71 and glutamate 141. Residues 148-150, 188-193, and lysine 224 contribute to the CTP site; these read DIE and KTKPTQ. UTP contacts are provided by residues 188-193 and lysine 224; that span reads KTKPTQ. 240-242 provides a ligand contact to ATP; it reads RDA. The 243-residue stretch at 292 to 534 folds into the Glutamine amidotransferase type-1 domain; it reads KIALVGKYVE…VRASITNKES (243 aa). An L-glutamine-binding site is contributed by glycine 354. Residue cysteine 381 is the Nucleophile; for glutamine hydrolysis of the active site. L-glutamine is bound by residues 382-385, glutamate 405, and arginine 462; that span reads LGMQ. Active-site residues include histidine 507 and glutamate 509.

This sequence belongs to the CTP synthase family. Homotetramer.

It carries out the reaction UTP + L-glutamine + ATP + H2O = CTP + L-glutamate + ADP + phosphate + 2 H(+). The catalysed reaction is L-glutamine + H2O = L-glutamate + NH4(+). The enzyme catalyses UTP + NH4(+) + ATP = CTP + ADP + phosphate + 2 H(+). The protein operates within pyrimidine metabolism; CTP biosynthesis via de novo pathway; CTP from UDP: step 2/2. Its activity is regulated as follows. Allosterically activated by GTP, when glutamine is the substrate; GTP has no effect on the reaction when ammonia is the substrate. The allosteric effector GTP functions by stabilizing the protein conformation that binds the tetrahedral intermediate(s) formed during glutamine hydrolysis. Inhibited by the product CTP, via allosteric rather than competitive inhibition. In terms of biological role, catalyzes the ATP-dependent amination of UTP to CTP with either L-glutamine or ammonia as the source of nitrogen. Regulates intracellular CTP levels through interactions with the four ribonucleotide triphosphates. The chain is CTP synthase from Bacillus cereus (strain AH187).